A 521-amino-acid polypeptide reads, in one-letter code: Maturase K (521 aa).

Belongs to the intron maturase 2 family. MatK subfamily.

It is found in the plastid. Its function is as follows. Usually encoded in the trnK tRNA gene intron. Probably assists in splicing its own and other chloroplast group II introns. This Cuscuta exaltata (Tall dodder) protein is Maturase K.